Here is a 505-residue protein sequence, read N- to C-terminus: Serine/threonine-protein kinase D (505 aa).

The 263-residue stretch at 9-271 folds into the Protein kinase domain; it reads YEIVKSLGSG…AMYQALHSLI (263 aa). Residues 15–23 and K40 each bind ATP; that span reads LGSGGFGDT. The active-site Proton acceptor is the D136. In terms of domain architecture, SH3b spans 436-505; sequence GASATIGGIP…GWIASQLVNF (70 aa).

The protein belongs to the protein kinase superfamily. Ser/Thr protein kinase family.

The catalysed reaction is L-seryl-[protein] + ATP = O-phospho-L-seryl-[protein] + ADP + H(+). It carries out the reaction L-threonyl-[protein] + ATP = O-phospho-L-threonyl-[protein] + ADP + H(+). The protein is Serine/threonine-protein kinase D (spkD) of Synechocystis sp. (strain ATCC 27184 / PCC 6803 / Kazusa).